We begin with the raw amino-acid sequence, 150 residues long: Ribonuclease K6 (150 aa).

An N-terminal signal peptide occupies residues 1–23; that stretch reads MVLCFPLLLLLLVLWGPVCLLHA. Residue histidine 38 is the Proton acceptor of the active site. Disulfide bonds link cysteine 46-cysteine 104, cysteine 60-cysteine 114, cysteine 78-cysteine 129, and cysteine 85-cysteine 92. Residue asparagine 55 is glycosylated (N-linked (GlcNAc...) asparagine). Substrate contacts are provided by residues 61 to 65 and lysine 86; that span reads KHQNT. A glycan (N-linked (GlcNAc...) asparagine) is linked at asparagine 100. Residue arginine 105 coordinates substrate. Catalysis depends on histidine 145, which acts as the Proton donor.

It belongs to the pancreatic ribonuclease family. As to quaternary structure, interacts (via N-terminus) with bacterial lipopolysaccharide (LPS).

The protein resides in the secreted. Its subcellular location is the lysosome. The protein localises to the cytoplasmic granule. In terms of biological role, ribonuclease which shows a preference for the pyrimidines uridine and cytosine. Has potent antibacterial activity against a range of Gram-positive and Gram-negative bacteria, including P.aeruginosa, A.baumanii, M.luteus, S.aureus, E.faecalis, E.faecium, S.saprophyticus and E.coli. Causes loss of bacterial membrane integrity, and also promotes agglutination of Gram-negative bacteria. Probably contributes to urinary tract sterility. Bactericidal activity is independent of RNase activity. The sequence is that of Ribonuclease K6 (RNASE6) from Macaca mulatta (Rhesus macaque).